A 462-amino-acid polypeptide reads, in one-letter code: Argininosuccinate lyase (462 aa).

Belongs to the lyase 1 family. Argininosuccinate lyase subfamily.

The protein localises to the cytoplasm. The enzyme catalyses 2-(N(omega)-L-arginino)succinate = fumarate + L-arginine. The protein operates within amino-acid biosynthesis; L-arginine biosynthesis; L-arginine from L-ornithine and carbamoyl phosphate: step 3/3. This Streptococcus agalactiae serotype V (strain ATCC BAA-611 / 2603 V/R) protein is Argininosuccinate lyase.